The primary structure comprises 103 residues: Small ribosomal subunit protein uS10c (103 aa).

It belongs to the universal ribosomal protein uS10 family. As to quaternary structure, part of the 30S ribosomal subunit.

It is found in the plastid. Its subcellular location is the chloroplast. Its function is as follows. Involved in the binding of tRNA to the ribosomes. This is Small ribosomal subunit protein uS10c from Trieres chinensis (Marine centric diatom).